A 159-amino-acid polypeptide reads, in one-letter code: Sperm acrosome-associated protein 5 (159 aa).

The first 21 residues, 1–21 (MKAWGTVVVTLATLMVVTVDA), serve as a signal peptide directing secretion. The region spanning 22–150 (KIYERCELAA…SEWLKGCDMH (129 aa)) is the C-type lysozyme domain. 4 disulfide bridges follow: C27-C147, C51-C135, C85-C100, and C96-C114. The active site involves E56.

This sequence belongs to the glycosyl hydrolase 22 family.

Its subcellular location is the secreted. It catalyses the reaction Hydrolysis of (1-&gt;4)-beta-linkages between N-acetylmuramic acid and N-acetyl-D-glucosamine residues in a peptidoglycan and between N-acetyl-D-glucosamine residues in chitodextrins.. This Homo sapiens (Human) protein is Sperm acrosome-associated protein 5 (SPACA5).